We begin with the raw amino-acid sequence, 324 residues long: Glyoxylate/hydroxypyruvate reductase B (324 aa).

Residues R237 and E266 contribute to the active site. H285 acts as the Proton donor in catalysis.

Belongs to the D-isomer specific 2-hydroxyacid dehydrogenase family. GhrB subfamily. In terms of assembly, homodimer.

Its subcellular location is the cytoplasm. The enzyme catalyses glycolate + NADP(+) = glyoxylate + NADPH + H(+). The catalysed reaction is (R)-glycerate + NAD(+) = 3-hydroxypyruvate + NADH + H(+). It carries out the reaction (R)-glycerate + NADP(+) = 3-hydroxypyruvate + NADPH + H(+). In terms of biological role, catalyzes the NADPH-dependent reduction of glyoxylate and hydroxypyruvate into glycolate and glycerate, respectively. This Salmonella choleraesuis (strain SC-B67) protein is Glyoxylate/hydroxypyruvate reductase B.